The sequence spans 265 residues: tRNA pseudouridine synthase A (265 aa).

The active-site Nucleophile is Asp-53. Substrate is bound at residue Tyr-111.

The protein belongs to the tRNA pseudouridine synthase TruA family. As to quaternary structure, homodimer.

The catalysed reaction is uridine(38/39/40) in tRNA = pseudouridine(38/39/40) in tRNA. In terms of biological role, formation of pseudouridine at positions 38, 39 and 40 in the anticodon stem and loop of transfer RNAs. In Acinetobacter baumannii (strain AB307-0294), this protein is tRNA pseudouridine synthase A.